Reading from the N-terminus, the 335-residue chain is Malate dehydrogenase 1 (335 aa).

NAD(+) is bound by residues 11-16 (GAGNVG) and D35. Substrate-binding residues include R97 and R103. NAD(+) contacts are provided by residues N110 and 133 to 135 (VTN). The substrate site is built by N135 and R166. The active-site Proton acceptor is the H190.

The protein belongs to the LDH/MDH superfamily. MDH type 3 family.

It catalyses the reaction (S)-malate + NAD(+) = oxaloacetate + NADH + H(+). In terms of biological role, catalyzes the reversible oxidation of malate to oxaloacetate. The polypeptide is Malate dehydrogenase 1 (mdh1) (Aquifex aeolicus (strain VF5)).